Reading from the N-terminus, the 552-residue chain is Hydroxylamine reductase (552 aa).

[4Fe-4S] cluster contacts are provided by C3, C6, C15, and C21. 8 residues coordinate hybrid [4Fe-2O-2S] cluster: H247, E271, C315, C407, C435, C460, E495, and K497. C407 carries the post-translational modification Cysteine persulfide.

This sequence belongs to the HCP family. [4Fe-4S] cluster serves as cofactor. Requires hybrid [4Fe-2O-2S] cluster as cofactor.

The protein localises to the cytoplasm. The catalysed reaction is A + NH4(+) + H2O = hydroxylamine + AH2 + H(+). In terms of biological role, catalyzes the reduction of hydroxylamine to form NH(3) and H(2)O. This Thermosipho melanesiensis (strain DSM 12029 / CIP 104789 / BI429) protein is Hydroxylamine reductase.